We begin with the raw amino-acid sequence, 319 residues long: tRNA uridine(34) hydroxylase (319 aa).

A Rhodanese domain is found at 127–221 (KQEDTVIIDA…YGKDPEVQGE (95 aa)). Residue C181 is the Cysteine persulfide intermediate of the active site.

Belongs to the TrhO family.

It catalyses the reaction uridine(34) in tRNA + AH2 + O2 = 5-hydroxyuridine(34) in tRNA + A + H2O. In terms of biological role, catalyzes oxygen-dependent 5-hydroxyuridine (ho5U) modification at position 34 in tRNAs. The polypeptide is tRNA uridine(34) hydroxylase (Bacillus cereus (strain Q1)).